We begin with the raw amino-acid sequence, 123 residues long: Large ribosomal subunit protein uL18 (123 aa).

This sequence belongs to the universal ribosomal protein uL18 family. In terms of assembly, part of the 50S ribosomal subunit; part of the 5S rRNA/L5/L18/L25 subcomplex. Contacts the 5S and 23S rRNAs.

Its function is as follows. This is one of the proteins that bind and probably mediate the attachment of the 5S RNA into the large ribosomal subunit, where it forms part of the central protuberance. The protein is Large ribosomal subunit protein uL18 of Bifidobacterium adolescentis (strain ATCC 15703 / DSM 20083 / NCTC 11814 / E194a).